The primary structure comprises 272 residues: tRNA pseudouridine synthase B (272 aa).

The active-site Nucleophile is the Asp-38.

This sequence belongs to the pseudouridine synthase TruB family. Type 1 subfamily.

The enzyme catalyses uridine(55) in tRNA = pseudouridine(55) in tRNA. Responsible for synthesis of pseudouridine from uracil-55 in the psi GC loop of transfer RNAs. The protein is tRNA pseudouridine synthase B of Campylobacter jejuni subsp. jejuni serotype O:2 (strain ATCC 700819 / NCTC 11168).